We begin with the raw amino-acid sequence, 243 residues long: Carboxy-S-adenosyl-L-methionine synthase (243 aa).

S-adenosyl-L-methionine is bound by residues Tyr-40, 65-67 (GCS), 90-91 (DN), 118-119 (DI), Asn-133, and Arg-200.

It belongs to the class I-like SAM-binding methyltransferase superfamily. Cx-SAM synthase family. As to quaternary structure, homodimer.

The enzyme catalyses prephenate + S-adenosyl-L-methionine = carboxy-S-adenosyl-L-methionine + 3-phenylpyruvate + H2O. Catalyzes the conversion of S-adenosyl-L-methionine (SAM) to carboxy-S-adenosyl-L-methionine (Cx-SAM). This chain is Carboxy-S-adenosyl-L-methionine synthase, found in Shewanella oneidensis (strain ATCC 700550 / JCM 31522 / CIP 106686 / LMG 19005 / NCIMB 14063 / MR-1).